The following is an 876-amino-acid chain: Valine--tRNA ligase (876 aa).

Residues 44-54 carry the 'HIGH' region motif; the sequence is PNVTGKLHLGH. Positions 520–524 match the 'KMSKS' region motif; it reads KMSKS. Position 523 (Lys523) interacts with ATP. Residues 805–876 are a coiled coil; that stretch reads LEGLIDMDKE…VKARIEQLKA (72 aa).

Belongs to the class-I aminoacyl-tRNA synthetase family. ValS type 1 subfamily. Monomer.

The protein localises to the cytoplasm. The catalysed reaction is tRNA(Val) + L-valine + ATP = L-valyl-tRNA(Val) + AMP + diphosphate. In terms of biological role, catalyzes the attachment of valine to tRNA(Val). As ValRS can inadvertently accommodate and process structurally similar amino acids such as threonine, to avoid such errors, it has a 'posttransfer' editing activity that hydrolyzes mischarged Thr-tRNA(Val) in a tRNA-dependent manner. In Staphylococcus aureus (strain MRSA252), this protein is Valine--tRNA ligase.